The primary structure comprises 34 residues: Potassium channel toxin alpha-KTx 18.2 (34 aa).

3 disulfide bridges follow: Cys-7-Cys-26, Cys-12-Cys-31, and Cys-16-Cys-33.

Expressed by the venom gland.

The protein resides in the secreted. Reversibly blocks Shaker B potassium channels. This chain is Potassium channel toxin alpha-KTx 18.2, found in Tityus discrepans (Venezuelan scorpion).